A 325-amino-acid chain; its full sequence is uncharacterized protein (325 aa).

The HD domain occupies 49–151 (RYEHSIGVML…ELCADRTDYT (103 aa)).

This is an uncharacterized protein from Bacillus subtilis (strain 168).